A 328-amino-acid chain; its full sequence is Arabinose 5-phosphate isomerase KdsD (328 aa).

Residues 42 to 184 enclose the SIS domain; that stretch reads CEKMFWCKGK…AVALLKARGF (143 aa). Residues 75-76, His-82, His-88, 114-123, 148-150, Thr-222, and Asp-275 each bind substrate; these read GT, ALIPVLKRLH, and KVA. Position 82 (His-82) interacts with Zn(2+). Residues 210-268 form the CBS 1 domain; sequence MHTGDEIPHVKKTASLRDALLEVTRKNLGMTVICDDNMMIEGIFTDGDLRRVFDMGVDV. The region spanning 277 to 328 is the CBS 2 domain; that stretch reads MTPGGIRVRPGILAVEALNLMQSRHITSVMVADGDHLLGVLHMHDLLRAGVV.

It belongs to the SIS family. GutQ/KpsF subfamily. Homotetramer.

It carries out the reaction D-arabinose 5-phosphate = D-ribulose 5-phosphate. The protein operates within carbohydrate biosynthesis; 3-deoxy-D-manno-octulosonate biosynthesis; 3-deoxy-D-manno-octulosonate from D-ribulose 5-phosphate: step 1/3. It functions in the pathway bacterial outer membrane biogenesis; lipopolysaccharide biosynthesis. In terms of biological role, involved in the biosynthesis of 3-deoxy-D-manno-octulosonate (KDO), a unique 8-carbon sugar component of lipopolysaccharides (LPSs). Catalyzes the reversible aldol-ketol isomerization between D-ribulose 5-phosphate (Ru5P) and D-arabinose 5-phosphate (A5P). This is Arabinose 5-phosphate isomerase KdsD (kdsD) from Escherichia coli O157:H7.